The sequence spans 147 residues: Leghemoglobin 6 (147 aa).

The 146-residue stretch at 2-147 folds into the Globin domain; that stretch reads SFTDKQEALV…LATEIKKAMS (146 aa). A nitrated tyrosine mark is found at Tyr-25 and Tyr-30. Residue Ser-45 coordinates heme b. Ser-45 carries the post-translational modification Phosphoserine. His-62 contributes to the O2 binding site. Heme b contacts are provided by Lys-65, His-94, and Lys-97. Position 135 is a nitrated tyrosine (Tyr-135).

The protein belongs to the plant globin family. Monomer. Nitrated in effective nodules and particularly in hypoxic conditions; this mechanism may play a protective role in the symbiosis by buffering toxic peroxynitrite NO(2)(-). Nitration level decrease during nodule senescence. Post-translationally, phosphorylation at Ser-45 disrupts the molecular environment of its porphyrin ring oxygen binding pocket, thus leading to a reduced oxygen consumption and to the delivery of oxygen O(2) to symbiosomes. Root nodules.

Its subcellular location is the cytoplasm. It is found in the cytosol. The protein localises to the nucleus. In terms of biological role, leghemoglobin that reversibly binds oxygen O(2) through a pentacoordinated heme iron. In root nodules, facilitates the diffusion of oxygen to the bacteroids while preventing the bacterial nitrogenase from being inactivated by buffering dioxygen, nitric oxide and carbon monoxide, and promoting the formation of reactive oxygen species (ROS, e.g. H(2)O(2)). This role is essential for symbiotic nitrogen fixation (SNF). In Medicago truncatula (Barrel medic), this protein is Leghemoglobin 6.